Here is a 311-residue protein sequence, read N- to C-terminus: N-acetylmuramic acid 6-phosphate etherase (311 aa).

The SIS domain maps to valine 66–lysine 229. The active-site Proton donor is the glutamate 94. The active site involves glutamate 125.

This sequence belongs to the GCKR-like family. MurNAc-6-P etherase subfamily. In terms of assembly, homodimer.

It carries out the reaction N-acetyl-D-muramate 6-phosphate + H2O = N-acetyl-D-glucosamine 6-phosphate + (R)-lactate. Its pathway is amino-sugar metabolism; N-acetylmuramate degradation. Specifically catalyzes the cleavage of the D-lactyl ether substituent of MurNAc 6-phosphate, producing GlcNAc 6-phosphate and D-lactate. The protein is N-acetylmuramic acid 6-phosphate etherase of Streptomyces avermitilis (strain ATCC 31267 / DSM 46492 / JCM 5070 / NBRC 14893 / NCIMB 12804 / NRRL 8165 / MA-4680).